Consider the following 538-residue polypeptide: Putative cysteine ligase BshC (538 aa).

A coiled-coil region spans residues 460 to 484 (KINEQIELLERMLKRNVEKKHEVEL).

Belongs to the BshC family.

Involved in bacillithiol (BSH) biosynthesis. May catalyze the last step of the pathway, the addition of cysteine to glucosamine malate (GlcN-Mal) to generate BSH. This is Putative cysteine ligase BshC from Bacillus thuringiensis (strain Al Hakam).